An 878-amino-acid chain; its full sequence is Alanine--tRNA ligase (878 aa).

The Zn(2+) site is built by His-567, His-571, Cys-669, and His-673.

It belongs to the class-II aminoacyl-tRNA synthetase family. Zn(2+) is required as a cofactor.

The protein localises to the cytoplasm. It carries out the reaction tRNA(Ala) + L-alanine + ATP = L-alanyl-tRNA(Ala) + AMP + diphosphate. Catalyzes the attachment of alanine to tRNA(Ala) in a two-step reaction: alanine is first activated by ATP to form Ala-AMP and then transferred to the acceptor end of tRNA(Ala). Also edits incorrectly charged Ser-tRNA(Ala) and Gly-tRNA(Ala) via its editing domain. The chain is Alanine--tRNA ligase from Rickettsia massiliae (strain Mtu5).